Here is a 124-residue protein sequence, read N- to C-terminus: MPTIQQLVRKGRRDKIAKVKTAALKGSPQRRGVCTRVYTTTPKKPNSALRKVARVKLTSQVEVTAYIPGEGHNLQEHSMVLVRGGRVKDLPGVRYKIIRGSLDTQGVKNRKQARSRYGAKKEKS.

Asp-89 is subject to 3-methylthioaspartic acid. The tract at residues 105-124 (QGVKNRKQARSRYGAKKEKS) is disordered. The span at 108-118 (KNRKQARSRYG) shows a compositional bias: basic residues.

This sequence belongs to the universal ribosomal protein uS12 family. As to quaternary structure, part of the 30S ribosomal subunit. Contacts proteins S8 and S17. May interact with IF1 in the 30S initiation complex.

Functionally, with S4 and S5 plays an important role in translational accuracy. Interacts with and stabilizes bases of the 16S rRNA that are involved in tRNA selection in the A site and with the mRNA backbone. Located at the interface of the 30S and 50S subunits, it traverses the body of the 30S subunit contacting proteins on the other side and probably holding the rRNA structure together. The combined cluster of proteins S8, S12 and S17 appears to hold together the shoulder and platform of the 30S subunit. In Mycolicibacterium smegmatis (strain ATCC 700084 / mc(2)155) (Mycobacterium smegmatis), this protein is Small ribosomal subunit protein uS12 (rpsL).